Consider the following 202-residue polypeptide: PXMP2/4 family protein 1 (202 aa).

Helical transmembrane passes span 21–41, 54–72, 138–154, and 161–177; these read PVITKSLTGTVVFFLGDTLAQ, LMMCTVGTFIVVPQIHFWF, KAWMIWPLTNCILFRFV, and LISNLVSVGWNCILSTV.

The protein belongs to the peroxisomal membrane protein PXMP2/4 family.

The protein resides in the membrane. The protein is PXMP2/4 family protein 1 of Dictyostelium discoideum (Social amoeba).